We begin with the raw amino-acid sequence, 1574 residues long: MAFSKGFRIYHKLDPPPFSLIVETRHKEECLMFESGAVAVLSSAEKEAIKGTYAKVLDAYGLLGVLRLNLGDTMLHYLVLVTGCMSVGKIQESEVFRVTSTEFISLRVDASDEDRISEVRKVLNSGNFYFAWSASGVSLDLSLNAHRSMQEHTTDNRFFWNQSLHLHLKHYGVNCDDWLLRLMCGGVEIRTIYAAHKQAKACLISRLSCERAGTRFNVRGTNDDGHVANFVETEQVIYLDDCVSSFIQIRGSVPLFWEQPGLQVGSHRVRMSRGFEANAPAFDRHFRTLKDLYGKQIVVNLLGSKEGEHMLSKAFQSHLKASEHASDIHMVSFDYHQMVKGGKAEKLHSILKPQVQKFLDYGFFYFDGSEVQRCQSGTVRTNCLDCLDRTNSVQAFLGLEMLAKQLEALGLAEKPQLVTRFQEVFRSMWSVNGDSISKIYAGTGALEGKAKLKDGARSVTRTIQNNFFDSSKQEAIDVLLLGNTLNSDLADKARALLTTGSLRVSEQTLQSASSKVLKNMCENFYKYSKPKKIRVCVGTWNVNGGKQFRSIAFKNQTLTDWLLDAPKLAGIQEFQDKRSKPTDIFAIGFEEMVELNAGNIVNASTTNQKLWAVELQKTISRDNKYVLLASEQLVGVCLFVFIRPQHAPFIRDVAVDTVKTGMGGATGNKGAVAIRMLFHTTSLCFVCSHFAAGQSQVKERNEDFVEIARKLSFPMGRMLFSHDYVFWCGDFNYRIDLPNEEVKELIRQQNWDSLIAGDQLINQKNAGQIFRGFLEGKVTFAPTYKYDLFSEDYDTSEKCRTPAWTDRVLWRRRKWPFDRSAEDLDLLNASFQDESKILYTWTPGTLLHYGRAELKTSDHRPVVALIDIDIFEVEAEERQKIYKEVIAVQGPPDGTVLVSIKSSAQESTFFDDALIDELLRQFAHFGEVILIRFVEDKMWVTFLEGSSALNALSLNGKELLNRTITITLKSPDWIKHLEEEMSLEKISVTLPSSASSTLLGEDAEVAADFDMEGDVDDYSAEVEELLPQHLQPSSSSGLGTSPSSSPRTSPCQSPTVPEYSAPSLPIRPSRAPSRTPGPPSSQGSPVDTQPAAQKDSSQTLEPKRPPPPRPVAPPARPAPPQRPPPPSGARSPAPARKEFGGVGAPPSPGVARREIEAPKSPGTARKDNIGRNQPSPQAGLAGPGPAGYGAARPTIPARAGVISAPQSQARVCAGRPTPDSQSKPSETLKGPAVLPEPLKPQAAFPQQPSLPTPAQKLQDPLVPIAAPTMPPSGPQPNLETPPQPPPRSRSSQSLPSDSSPQLQQEQPTGQVKINGISGVKQEPTLKSDPFEDLSLSVLAVSKAQPSVQISPVLTPDPKMLIQLPSASQSQVNPLSSVSCMPTRPPGPEESKSQESMGSSANPFPSLPCRNPFTDRTAAPGNPFRVQSQESEATSWLSKEEPVPNSPFPPLMPLSHDTSKASSSLGGFEDNFDLQSQSTVKTSNPKGWVTFDEDDNFPTTGKSKSVCPDLVGNAPASFDDDWSKGASVSFCVLPARRPPPPPPPVPLLPPGTTSSAGPSTTLPSKAPSTLDFTER.

Residues 119–442 (VRKVLNSGNF…GDSISKIYAG (324 aa)) form the SAC domain. A phosphoserine mark is found at Ser-820 and Ser-830. The 78-residue stretch at 894 to 971 (GTVLVSIKSS…RTITITLKSP (78 aa)) folds into the RRM domain. Residues 1029 to 1054 (HLQPSSSSGLGTSPSSSPRTSPCQSP) show a composition bias toward low complexity. The disordered stretch occupies residues 1029–1327 (HLQPSSSSGL…GVKQEPTLKS (299 aa)). The residue at position 1053 (Ser-1053) is a Phosphoserine. Over residues 1080–1100 (SSQGSPVDTQPAAQKDSSQTL) the composition is skewed to polar residues. Residues 1105–1127 (PPPPRPVAPPARPAPPQRPPPPS) are compositionally biased toward pro residues. A phosphoserine mark is found at Ser-1147 and Ser-1175. An Omega-N-methylarginine modification is found at Arg-1198. Thr-1217 carries the phosphothreonine modification. Residues 1268 to 1287 (TMPPSGPQPNLETPPQPPPR) show a composition bias toward pro residues. Residues 1288 to 1307 (SRSSQSLPSDSSPQLQQEQP) are compositionally biased toward low complexity. 2 positions are modified to phosphoserine: Ser-1290 and Ser-1350. Thr-1354 is subject to Phosphothreonine. Disordered regions lie at residues 1363-1507 (LPSA…SVCP) and 1532-1574 (LPAR…FTER). 4 stretches are compositionally biased toward polar residues: residues 1364–1379 (PSAS…SVSC), 1393–1402 (QESMGSSANP), 1424–1436 (RVQS…TSWL), and 1472–1484 (DLQS…TSNP). A 3 X 3 AA repeats of N-P-F region spans residues 1403–1425 (FPSLPCRNPFTDRTAAPGNPFRV). Residues 1535-1548 (RRPPPPPPPVPLLP) are compositionally biased toward pro residues. The span at 1549-1563 (PGTTSSAGPSTTLPS) shows a compositional bias: low complexity. The segment covering 1565 to 1574 (APSTLDFTER) has biased composition (polar residues).

Belongs to the synaptojanin family. This sequence in the central section; belongs to the inositol 1,4,5-trisphosphate 5-phosphatase family. In terms of assembly, interacts with ASH/GRB2. Interacts with PACSIN1, PACSIN2 and PACSIN3. Interacts with AMPH, SH3GL1, SH3GL2 and SH3GL3. Interacts with MYO1E (via SH3 domain). Interacts with BIN1 and DNM1. Interacts with EPS15.

The protein resides in the cytoplasm. It localises to the perinuclear region. The catalysed reaction is a 1,2-diacyl-sn-glycero-3-phospho-(1D-myo-inositol-4,5-bisphosphate) + H2O = a 1,2-diacyl-sn-glycero-3-phospho-(1D-myo-inositol 4-phosphate) + phosphate. In terms of biological role, phosphatase that acts on various phosphoinositides, including phosphatidylinositol 4-phosphate, phosphatidylinositol (4,5)-bisphosphate and phosphatidylinositol (3,4,5)-trisphosphate. Has a role in clathrin-mediated endocytosis. Hydrolyzes PIP2 bound to actin regulatory proteins resulting in the rearrangement of actin filaments downstream of tyrosine kinase and ASH/GRB2. In Mus musculus (Mouse), this protein is Synaptojanin-1 (Synj1).